A 471-amino-acid polypeptide reads, in one-letter code: Histone deacetylase 6 (471 aa).

M1 bears the N-acetylmethionine mark. Residues 20–333 (RVSYFYEPTI…WCYETAVAVG (314 aa)) are histone deacetylase. Residue H153 is the Proton donor/acceptor of the active site. D188, H190, and D276 together coordinate Zn(2+). The interval 389-471 (PSVQFQHTPP…PEPDVNPPSS (83 aa)) is disordered. Over residues 453–463 (GEDEMDDDNPE) the composition is skewed to acidic residues.

The protein belongs to the histone deacetylase family. HD type 1 subfamily. As to quaternary structure, interacts with Coi1, which functions in an SCF complex that recruits regulators for ubiquitination. Interacts with AHL22. Interacts with AS1. Part of the AS1 repressor complex composed of AS1, LBD6/AS2 and HDA6. Binds to EBS and SHL. Interacts with MBD6. Interacts with HDA5. Interacts with FLD. Zn(2+) is required as a cofactor. Not detected in leaves, stems, flowers and young siliques.

It is found in the nucleus. Its subcellular location is the nucleolus. The catalysed reaction is N(6)-acetyl-L-lysyl-[histone] + H2O = L-lysyl-[histone] + acetate. With respect to regulation, inhibited by trichostatin A. Responsible for the deacetylation of lysine residues on the N-terminal part of the core histones (H2A, H2B, H3 and H4). Might remove acetyl residues only from specific targets, such as rDNA repeats or complex transgenes. Histone deacetylation gives a tag for epigenetic repression and plays an important role in transcriptional regulation, cell cycle progression and developmental events. Histone deacetylases act via the formation of large multiprotein complexes. Required for rRNA gene silencing in nucleolar dominance. Plays a role in transgene silencing, but this effect seems to bee independent of the histone deacetylase activity. Part of the AS1 repressor complex to regulate the KNOX expression in leaf development. Binds to KNAT1, KNAT2, and KNATM chromatin. Involved in the regulation of flowering time. Forms a histone deacetylase complex with HDA5, FLD and MSI4/FVE that represses FLC gene expression to control flowering time. This is Histone deacetylase 6 from Arabidopsis thaliana (Mouse-ear cress).